The primary structure comprises 184 residues: Large ribosomal subunit protein uL5 (184 aa).

Belongs to the universal ribosomal protein uL5 family. Part of the 50S ribosomal subunit; part of the 5S rRNA/L5/L18/L25 subcomplex. Contacts the 5S rRNA and the P site tRNA. Forms a bridge to the 30S subunit in the 70S ribosome.

In terms of biological role, this is one of the proteins that bind and probably mediate the attachment of the 5S RNA into the large ribosomal subunit, where it forms part of the central protuberance. In the 70S ribosome it contacts protein S13 of the 30S subunit (bridge B1b), connecting the 2 subunits; this bridge is implicated in subunit movement. Contacts the P site tRNA; the 5S rRNA and some of its associated proteins might help stabilize positioning of ribosome-bound tRNAs. This is Large ribosomal subunit protein uL5 from Fervidobacterium nodosum (strain ATCC 35602 / DSM 5306 / Rt17-B1).